The following is a 398-amino-acid chain: Dual-specificity RNA methyltransferase RlmN (398 aa).

Glutamate 119 serves as the catalytic Proton acceptor. In terms of domain architecture, Radical SAM core spans 125–364 (EEERATLCVS…TIVRKTRGDD (240 aa)). An intrachain disulfide couples cysteine 132 to cysteine 369. The [4Fe-4S] cluster site is built by cysteine 139, cysteine 143, and cysteine 146. Residues 193 to 194 (GE), serine 225, 247 to 249 (SLH), and asparagine 326 each bind S-adenosyl-L-methionine. Cysteine 369 (S-methylcysteine intermediate) is an active-site residue.

It belongs to the radical SAM superfamily. RlmN family. It depends on [4Fe-4S] cluster as a cofactor.

Its subcellular location is the cytoplasm. The enzyme catalyses adenosine(2503) in 23S rRNA + 2 reduced [2Fe-2S]-[ferredoxin] + 2 S-adenosyl-L-methionine = 2-methyladenosine(2503) in 23S rRNA + 5'-deoxyadenosine + L-methionine + 2 oxidized [2Fe-2S]-[ferredoxin] + S-adenosyl-L-homocysteine. It catalyses the reaction adenosine(37) in tRNA + 2 reduced [2Fe-2S]-[ferredoxin] + 2 S-adenosyl-L-methionine = 2-methyladenosine(37) in tRNA + 5'-deoxyadenosine + L-methionine + 2 oxidized [2Fe-2S]-[ferredoxin] + S-adenosyl-L-homocysteine. Functionally, specifically methylates position 2 of adenine 2503 in 23S rRNA and position 2 of adenine 37 in tRNAs. m2A2503 modification seems to play a crucial role in the proofreading step occurring at the peptidyl transferase center and thus would serve to optimize ribosomal fidelity. The protein is Dual-specificity RNA methyltransferase RlmN of Pectobacterium atrosepticum (strain SCRI 1043 / ATCC BAA-672) (Erwinia carotovora subsp. atroseptica).